A 289-amino-acid polypeptide reads, in one-letter code: dTDP-rhamnosyl transferase RfbG (289 aa).

The protein belongs to the glycosyltransferase 2 family.

Its pathway is bacterial outer membrane biogenesis; lipopolysaccharide biosynthesis. The protein is dTDP-rhamnosyl transferase RfbG (rfbG) of Shigella flexneri.